The following is a 448-amino-acid chain: B box and SPRY domain-containing protein (448 aa).

The span at 1–18 (MSSDVSGTESGSESGPES) shows a compositional bias: low complexity. Residues 1–58 (MSSDVSGTESGSESGPESVPEPVPEPGPEPESEPGPGPAPGPGPGPAPGPGPGLGREP) are disordered. Positions 19–51 (VPEPVPEPGPEPESEPGPGPAPGPGPGPAPGPG) are enriched in pro residues. The B box-type zinc finger occupies 63 to 111 (QPCQLCPEHGKPLSWFCLSERRPVCATCAGFGGRCHRHRIRRAEEHAEE). The region spanning 257-448 (SPLLTQLWAT…VADQVISIVC (192 aa)) is the B30.2/SPRY domain.

As to quaternary structure, interacts with TRPV5 and TRPV6. Interacts with YWHAZ/14-3-3 protein zeta. In terms of tissue distribution, predominantly expressed in testis. Expressed in brain at low levels.

The protein resides in the cytoplasm. Its subcellular location is the membrane. Functionally, may regulate epithelial calcium transport by inhibiting TRPV5 activity. In Rattus norvegicus (Rat), this protein is B box and SPRY domain-containing protein (Bspry).